A 480-amino-acid polypeptide reads, in one-letter code: Cysteine--tRNA ligase (480 aa).

Zn(2+) is bound at residue Cys-29. The 'HIGH' region motif lies at 31–41 (ITVYDYCHLGH). Cys-215, His-240, and Glu-244 together coordinate Zn(2+). A 'KMSKS' region motif is present at residues 272–276 (KMSKS). Lys-275 is a binding site for ATP.

It belongs to the class-I aminoacyl-tRNA synthetase family. As to quaternary structure, monomer. Zn(2+) serves as cofactor.

It is found in the cytoplasm. It carries out the reaction tRNA(Cys) + L-cysteine + ATP = L-cysteinyl-tRNA(Cys) + AMP + diphosphate. The protein is Cysteine--tRNA ligase of Microcystis aeruginosa (strain NIES-843 / IAM M-2473).